The primary structure comprises 520 residues: Putative cytochrome P450 CYP13A4 (520 aa).

Cys-464 is a heme binding site.

This sequence belongs to the cytochrome P450 family. Heme serves as cofactor.

Functionally, cytochromes P450 are a group of heme-thiolate monooxygenases. They oxidize a variety of structurally unrelated compounds, including steroids, fatty acids, and xenobiotics. This chain is Putative cytochrome P450 CYP13A4 (cyp-13A4), found in Caenorhabditis elegans.